A 209-amino-acid chain; its full sequence is Large ribosomal subunit protein uL3 (209 aa).

Gln150 bears the N5-methylglutamine mark.

Belongs to the universal ribosomal protein uL3 family. Part of the 50S ribosomal subunit. Forms a cluster with proteins L14 and L19. Methylated by PrmB.

Its function is as follows. One of the primary rRNA binding proteins, it binds directly near the 3'-end of the 23S rRNA, where it nucleates assembly of the 50S subunit. The protein is Large ribosomal subunit protein uL3 of Photobacterium profundum (strain SS9).